The sequence spans 500 residues: 4-aminobutyrate aminotransferase, mitochondrial (500 aa).

The N-terminal 28 residues, 1 to 28, are a transit peptide targeting the mitochondrion; it reads MAFLLITRRLACSSQKNLHLFIPGSRYI. Cys163 is a [2Fe-2S] cluster binding site. 164–165 provides a ligand contact to pyridoxal 5'-phosphate; the sequence is GS. Cys166 is a binding site for [2Fe-2S] cluster. Position 220 (Arg220) interacts with substrate. Lys231 bears the N6-succinyllysine mark. Lys252 is subject to N6-acetyllysine; alternate. Lys252 is modified (N6-succinyllysine; alternate). Residues Lys279 and Lys318 each carry the N6-acetyllysine modification. The residue at position 357 (Lys357) is an N6-(pyridoxal phosphate)lysine. Thr381 provides a ligand contact to pyridoxal 5'-phosphate. Residue Lys413 is modified to N6-acetyllysine; alternate. At Lys413 the chain carries N6-succinyllysine; alternate. N6-acetyllysine occurs at positions 452 and 470.

Belongs to the class-III pyridoxal-phosphate-dependent aminotransferase family. In terms of assembly, homodimer; disulfide-linked. The cofactor is pyridoxal 5'-phosphate. [2Fe-2S] cluster serves as cofactor.

The protein localises to the mitochondrion matrix. It carries out the reaction 4-aminobutanoate + 2-oxoglutarate = succinate semialdehyde + L-glutamate. The catalysed reaction is (S)-3-amino-2-methylpropanoate + 2-oxoglutarate = 2-methyl-3-oxopropanoate + L-glutamate. Functionally, catalyzes the conversion of gamma-aminobutyrate and L-beta-aminoisobutyrate to succinate semialdehyde and methylmalonate semialdehyde, respectively. Can also convert delta-aminovalerate and beta-alanine. This Mus musculus (Mouse) protein is 4-aminobutyrate aminotransferase, mitochondrial.